The sequence spans 98 residues: Small ribosomal subunit protein bS20 (98 aa).

A compositionally biased stretch (basic residues) spans 1–15 (MAPKKTTKKGGPKKR). Positions 1-21 (MAPKKTTKKGGPKKRPSAEKR) are disordered.

Belongs to the bacterial ribosomal protein bS20 family.

Functionally, binds directly to 16S ribosomal RNA. The polypeptide is Small ribosomal subunit protein bS20 (Chlamydia abortus (strain DSM 27085 / S26/3) (Chlamydophila abortus)).